The following is a 1347-amino-acid chain: Spermatogenesis-associated protein 31A1 (1347 aa).

A helical transmembrane segment spans residues 23–43; it reads PWVLDIFLTLVFALGFFFLLL. 6 disordered regions span residues 55–89, 106–235, 373–397, 628–658, 899–955, and 1085–1160; these read PSPS…ECPR, GPHL…STLI, EQDT…GPQK, DESP…EAQK, PRGI…REAV, and HEEP…PPSV. Over residues 60 to 82 the composition is skewed to basic residues; it reads GKRKCPVGRRRRPRGRMKNHSLR. Residues 165–178 are compositionally biased toward polar residues; the sequence is LASTPSPGPMTTSV. Positions 198–222 are enriched in pro residues; it reads PEPPALFPHPPHTPDPLACSPPPPK. Polar residues-rich tracts occupy residues 631–651 and 927–948; these read PGTS…STGE and LTYS…SSKA. Composition is skewed to basic and acidic residues over residues 1108–1127 and 1137–1146; these read HKSE…RLEG and RKTEDTHQDE.

Belongs to the SPATA31 family.

The protein resides in the membrane. Its function is as follows. May play a role in spermatogenesis. This Homo sapiens (Human) protein is Spermatogenesis-associated protein 31A1.